The following is a 387-amino-acid chain: MSVIKMTDLDLAGKRVLIRADLNVPVKDGKVTSDARIRASLPTIEAALKQGAKVMITSHLGRPIEGEYNEEFSLKPVVDYLKEKLSSSVRLEKEYLEGVEVSEGELVVLENVRFNKGEKKDDESLAKKYASLCDIYVMDAFGTAHRAQASTHGVAKFAPVACAGPLLFGELEALGKALDNPARPMVAIVGGSKVSTKLTVLDTLSKIADQLIVGGGIANTFVAAEGHNVGRSLYEDDLIPEAKKLLISCDIPVPTDVRVATEFSETAEATLKSSSDIKDDEQILDLGDESAQRLADILKNAKTILWNGPVGVFEFPNFRQGTEIVARAIADSDAFSIAGGGDTLAAIDLFGIADKISYISTGGGAFLEFVEGKKLPAVVMLEERAKQ.

Substrate contacts are provided by residues 21–23, arginine 36, 59–62, arginine 113, and arginine 146; these read DLN and HLGR. ATP is bound by residues lysine 197, glutamate 314, and 340 to 343; that span reads GGDT.

The protein belongs to the phosphoglycerate kinase family. Monomer.

It localises to the cytoplasm. It carries out the reaction (2R)-3-phosphoglycerate + ATP = (2R)-3-phospho-glyceroyl phosphate + ADP. It participates in carbohydrate degradation; glycolysis; pyruvate from D-glyceraldehyde 3-phosphate: step 2/5. In Photorhabdus luminescens (Xenorhabdus luminescens), this protein is Phosphoglycerate kinase.